The following is a 656-amino-acid chain: Vi polysaccharide export protein VexE (656 aa).

In terms of biological role, may be involved in translocation of the Vi antigen. The chain is Vi polysaccharide export protein VexE (vexE) from Salmonella typhi.